Here is a 77-residue protein sequence, read N- to C-terminus: UPF0337 protein CE0198 (77 aa).

A disordered region spans residues 1-77 (MGDLSNKAEG…PDVEHPEAVN (77 aa)). 2 stretches are compositionally biased toward basic and acidic residues: residues 30 to 56 (DEGR…KDGA) and 64 to 77 (QDKD…EAVN).

It belongs to the UPF0337 (CsbD) family.

The polypeptide is UPF0337 protein CE0198 (Corynebacterium efficiens (strain DSM 44549 / YS-314 / AJ 12310 / JCM 11189 / NBRC 100395)).